Consider the following 575-residue polypeptide: Preterminal protein (575 aa).

Positions 309–318 match the Nuclear localization signal motif; it reads RLPRVTRRRR. The interval 314–340 is disordered; it reads TRRRRRPPSPAPPPEEIEEAAMEVEEP. Residues 328–340 show a composition bias toward acidic residues; the sequence is EEIEEAAMEVEEP. Position 510 is an O-(5'-phospho-DNA)-serine (Ser-510).

It belongs to the adenoviridae terminal protein family. Heterodimer with the polymerase; this heterodimer binds to bp 9 to 18 of the genome. Interacts with host POU2F1; POU2F1 binds to the auxiliary sequences in the inverted terminal repeats and tethers the pTP-POL heterodimer to the origin DNA thereby participating in the assembly of the pre-initiation complex (POL-TP-DBP-NFIA-POU2F1). Post-translationally, preterminal protein is used to replicate viral genome, upon genomic encapsidation it is processed first into iTP and finally into TP by adenovirus protease.

The protein resides in the host nucleus matrix. Its function is as follows. Protein covalently bound to the viral DNA that acts as a primer for viral genomic replication by DNA strand displacement. Assembles on the viral origin of replication in an initiation complex with viral polymerase, DBP, host NFIA and host POU2F1/OCT1. During initiation, the polymerase covalently couples the first dCTP with Ser-580 of pTP. The terminal protein stimulates the template activity over 20 fold compared to protein-free templates. Neo-synthesized viral genomes are linked to two preterminal proteins, one for each 5' end. These new genomes are encapsidated in the nucleus, and during capsid maturation by viral protease, preterminal protein is first cleaved into intermediary (iTP), then into mature TP. May play a role in host nuclear matrix localization of genomic DNA. The sequence is that of Preterminal protein from Fowl adenovirus A serotype 1 (strain CELO / Phelps) (FAdV-1).